The following is a 481-amino-acid chain: Methylenetetrahydrofolate--tRNA-(uracil-5-)-methyltransferase TrmFO (481 aa).

13–18 is a binding site for FAD; it reads GGGLAG.

Belongs to the MnmG family. TrmFO subfamily. FAD is required as a cofactor.

The protein localises to the cytoplasm. It catalyses the reaction uridine(54) in tRNA + (6R)-5,10-methylene-5,6,7,8-tetrahydrofolate + NADH + H(+) = 5-methyluridine(54) in tRNA + (6S)-5,6,7,8-tetrahydrofolate + NAD(+). The catalysed reaction is uridine(54) in tRNA + (6R)-5,10-methylene-5,6,7,8-tetrahydrofolate + NADPH + H(+) = 5-methyluridine(54) in tRNA + (6S)-5,6,7,8-tetrahydrofolate + NADP(+). Catalyzes the folate-dependent formation of 5-methyl-uridine at position 54 (M-5-U54) in all tRNAs. The polypeptide is Methylenetetrahydrofolate--tRNA-(uracil-5-)-methyltransferase TrmFO (Agrobacterium fabrum (strain C58 / ATCC 33970) (Agrobacterium tumefaciens (strain C58))).